Consider the following 113-residue polypeptide: uncharacterized protein (113 aa).

An N-terminal signal peptide occupies residues 1–16 (MKCLVVLTALFGISTA). Over residues 81–101 (GGNGGNGGGGNGGNNGNGNGN) the composition is skewed to gly residues. Residues 81-103 (GGNGGNGGGGNGGNNGNGNGNNG) are disordered.

In terms of tissue distribution, nacreous layer of shell (at protein level).

Its subcellular location is the secreted. This is an uncharacterized protein from Margaritifera margaritifera (Freshwater pearl mussel).